Reading from the N-terminus, the 210-residue chain is ATP-dependent Clp protease proteolytic subunit (210 aa).

The active-site Nucleophile is the serine 107. Histidine 132 is a catalytic residue.

It belongs to the peptidase S14 family. As to quaternary structure, fourteen ClpP subunits assemble into 2 heptameric rings which stack back to back to give a disk-like structure with a central cavity, resembling the structure of eukaryotic proteasomes.

The protein localises to the cytoplasm. It carries out the reaction Hydrolysis of proteins to small peptides in the presence of ATP and magnesium. alpha-casein is the usual test substrate. In the absence of ATP, only oligopeptides shorter than five residues are hydrolyzed (such as succinyl-Leu-Tyr-|-NHMec, and Leu-Tyr-Leu-|-Tyr-Trp, in which cleavage of the -Tyr-|-Leu- and -Tyr-|-Trp bonds also occurs).. Functionally, cleaves peptides in various proteins in a process that requires ATP hydrolysis. Has a chymotrypsin-like activity. Plays a major role in the degradation of misfolded proteins. The sequence is that of ATP-dependent Clp protease proteolytic subunit from Cereibacter sphaeroides (strain ATCC 17029 / ATH 2.4.9) (Rhodobacter sphaeroides).